The chain runs to 701 residues: Elongation factor G (701 aa).

Residues 8-290 enclose the tr-type G domain; that stretch reads TQYRNIGISA…AIIEYLPSPK (283 aa). GTP-binding positions include 17-24, 88-92, and 142-145; these read AHIDAGKT, DTPGH, and NKMD.

This sequence belongs to the TRAFAC class translation factor GTPase superfamily. Classic translation factor GTPase family. EF-G/EF-2 subfamily.

It is found in the cytoplasm. Catalyzes the GTP-dependent ribosomal translocation step during translation elongation. During this step, the ribosome changes from the pre-translocational (PRE) to the post-translocational (POST) state as the newly formed A-site-bound peptidyl-tRNA and P-site-bound deacylated tRNA move to the P and E sites, respectively. Catalyzes the coordinated movement of the two tRNA molecules, the mRNA and conformational changes in the ribosome. This is Elongation factor G from Buchnera aphidicola subsp. Cinara cedri (strain Cc).